We begin with the raw amino-acid sequence, 970 residues long: Disks large 1 tumor suppressor protein (970 aa).

Positions 4-64 constitute an L27 domain; sequence KKQEAHRALE…FYELTLLDDS (61 aa). The segment at 161 to 209 is disordered; the sequence is TENAKEPTVEQQQKQQQAQQRSSRSPQQQNPQQQQGSKSRSGSQTVNGD. Residues 171-204 show a composition bias toward low complexity; the sequence is QQQKQQQAQQRSSRSPQQQNPQQQQGSKSRSGSQ. 2 PDZ domains span residues 216–303 and 330–421; these read DIQL…KRKR and EIDL…GKTQ. The disordered stretch occupies residues 424–477; the sequence is TTSASGGGGGGLSSGQQLSQSQSQLATSQSQSQVHQQQHATPMVNSQSTEPGSR. The segment covering 437-462 has biased composition (low complexity); it reads SGQQLSQSQSQLATSQSQSQVHQQQH. The segment covering 466–477 has biased composition (polar residues); sequence MVNSQSTEPGSR. S496 is subject to Phosphoserine. In terms of domain architecture, PDZ 3 spans 506-587; that stretch reads TITIQKGPQG…VVTLLAQYRP (82 aa). The SH3 domain occupies 620 to 690; it reads KRSLYVRALF…PSKRRWERKM (71 aa). T714 carries the post-translational modification Phosphothreonine. The region spanning 780 to 955 is the Guanylate kinase-like domain; sequence TRPVIILGPL…IYSKVKSMIW (176 aa).

This sequence belongs to the MAGUK family. During the cellular blastoderm stage, isoform B, isoform F, isoform H, isoform I and isoform L expression is localized to the cell borders. From stage 11 onwards, expression is found predominantly in the developing nervous system: axon bundles in the ventral cord and the brain. Stage 14 and 15 embryos exhibit expression in the developing body wall muscle. Expression in neuropil regions of the CNS and at NMJs persists through to larval development. Other isoforms show expression in embryonic epithelial cells. In larvae, expression is seen as a belt around salivary glands, imaginal disks and proventriculus. Expressed in adult reproductive tissues. In epithelia, coexpressed with scrib throughout development.

Its subcellular location is the cytoplasm. It localises to the cell membrane. The protein localises to the basolateral cell membrane. The protein resides in the cytoskeleton. It is found in the cell junction. Its subcellular location is the septate junction. Its function is as follows. During embryonic development, some isoforms are essential for proper neuronal differentiation and organization. Required for cell polarity; maintenance of apicobasal polarity. Plays a critical role at septate junctions in cellular growth control during larval development. The presence of a guanylate kinase domain suggests involvement in cellular adhesion as well as signal transduction to control cellular proliferation. The sequence is that of Disks large 1 tumor suppressor protein (dlg1) from Drosophila melanogaster (Fruit fly).